Consider the following 368-residue polypeptide: uncharacterized protein (368 aa).

Disordered regions lie at residues 1–22 and 282–317; these read MEKSSNTTGSGGPKSDSQLPEK and KHLGRRSKKAQKRVEKMKKAYKESKEEKASSQEPPA. Residues 293–311 are compositionally biased toward basic and acidic residues; that stretch reads KRVEKMKKAYKESKEEKAS.

This is an uncharacterized protein from Mus musculus (Mouse).